Here is a 237-residue protein sequence, read N- to C-terminus: Uridylate kinase (237 aa).

ATP is bound at residue 9-12 (KLSG). UMP is bound at residue Gly-51. Residues Gly-52 and Arg-56 each contribute to the ATP site. UMP contacts are provided by residues Asp-71 and 132–139 (CGNPFFTT). ATP is bound by residues Thr-159, Tyr-165, and Asp-168.

It belongs to the UMP kinase family. Homohexamer.

It localises to the cytoplasm. It catalyses the reaction UMP + ATP = UDP + ADP. It functions in the pathway pyrimidine metabolism; CTP biosynthesis via de novo pathway; UDP from UMP (UMPK route): step 1/1. With respect to regulation, inhibited by UTP. In terms of biological role, catalyzes the reversible phosphorylation of UMP to UDP. The polypeptide is Uridylate kinase (Prochlorococcus marinus (strain MIT 9303)).